The following is a 238-amino-acid chain: CD63 antigen (238 aa).

The Cytoplasmic segment spans residues 2-11 (AVEGGMKCVK). The chain crosses the membrane as a helical span at residues 12-32 (FLLYVLLLAFCACAVGLIAVG). Topologically, residues 33-51 (VGAQLVLSQTIIQGATPGS) are extracellular. A helical transmembrane segment spans residues 52–72 (LLPVVIIAVGVFLFLVAFVGC). The Cytoplasmic segment spans residues 73–81 (CGACKENYC). The helical transmembrane segment at 82–102 (LMITFAIFLSLIMLVEVAAAI) threads the bilayer. Residues 103–203 (AGYVFRDKVM…KIGGWLRKNV (101 aa)) are Extracellular-facing. N-linked (GlcNAc...) asparagine glycosylation is found at N130, N150, and N172. A helical transmembrane segment spans residues 204 to 224 (LVVAAAALGIAFVEVLGIVFA). Topologically, residues 225 to 238 (CCLVKSIRSGYEVM) are cytoplasmic. The short motif at 234–238 (GYEVM) is the Lysosomal targeting motif element.

The protein belongs to the tetraspanin (TM4SF) family. Interacts with TIMP1 and ITGB1 and recruits TIMP1 to ITGB1. Interacts with CD9. Identified in a complex with CD9 and ITGB3. Interacts with PMEL. Interacts with KDR/VEGFR2; identified in a complex with ITGB1 and KDR/VEGFR2 and is required to recruit KDR to ITGB1 complexes. Interacts with SYT7. Post-translationally, palmitoylated at a low, basal level in unstimulated platelets. The level of palmitoylation increases when platelets are activated by thrombin (in vitro). In terms of tissue distribution, detected in platelets (at protein level). Dysplastic nevi, radial growth phase primary melanomas, hematopoietic cells, tissue macrophages.

The protein localises to the cell membrane. Its subcellular location is the lysosome membrane. The protein resides in the late endosome membrane. It is found in the endosome. It localises to the multivesicular body. The protein localises to the melanosome. Its subcellular location is the secreted. The protein resides in the extracellular exosome. It is found in the cell surface. Its function is as follows. Functions as a cell surface receptor for TIMP1 and plays a role in the activation of cellular signaling cascades. Plays a role in the activation of ITGB1 and integrin signaling, leading to the activation of AKT, FAK/PTK2 and MAP kinases. Promotes cell survival, reorganization of the actin cytoskeleton, cell adhesion, spreading and migration, via its role in the activation of AKT and FAK/PTK2. Plays a role in VEGFA signaling via its role in regulating the internalization of KDR/VEGFR2. Plays a role in intracellular vesicular transport processes, and is required for normal trafficking of the PMEL luminal domain that is essential for the development and maturation of melanocytes. Plays a role in the adhesion of leukocytes onto endothelial cells via its role in the regulation of SELP trafficking. May play a role in mast cell degranulation in response to Ms4a2/FceRI stimulation, but not in mast cell degranulation in response to other stimuli. In Homo sapiens (Human), this protein is CD63 antigen (CD63).